The sequence spans 455 residues: Inactive peptidyl-prolyl cis-trans isomerase shutdown (455 aa).

The disordered stretch occupies residues 34–54; that stretch reads SQQNHARDLGLDSDSDSDYED. Acidic residues predominate over residues 44–54; it reads LDSDSDSDYED. In terms of domain architecture, PPIase FKBP-type spans 103–192; the sequence is KARVSVRYSG…LFKVEVIDYS (90 aa). 2 TPR repeats span residues 218–251 and 303–336; these read AVDL…LNYC and CKAL…QPAN.

This sequence belongs to the FKBP6 family. Interacts with Hsp83. Strongly expressed in the germline stem cells and in 16-cell cysts. Present in the germ cells throughout embryogenesis. Defects are due to derepression of transposable elements and impaired piRNA biogenesis.

The protein resides in the cytoplasm. The protein localises to the cytoplasmic ribonucleoprotein granule. Co-chaperone required during oogenesis to repress transposable elements and prevent their mobilization, which is essential for the germline integrity. Acts via the piRNA metabolic process, which mediates the repression of transposable elements during meiosis by forming complexes composed of piRNAs and Piwi proteins and govern the methylation and subsequent repression of transposons. Acts as a co-chaperone via its interaction with Hsp83/HSP90 and is required for the biogenesis of all three piRNA major populations. This Drosophila melanogaster (Fruit fly) protein is Inactive peptidyl-prolyl cis-trans isomerase shutdown.